The sequence spans 356 residues: uncharacterized protein (356 aa).

This is an uncharacterized protein from Saccharolobus islandicus (Sulfolobus islandicus).